A 103-amino-acid chain; its full sequence is Co-chaperonin GroES (103 aa).

This sequence belongs to the GroES chaperonin family. Heptamer of 7 subunits arranged in a ring. Interacts with the chaperonin GroEL.

Its subcellular location is the cytoplasm. Functionally, together with the chaperonin GroEL, plays an essential role in assisting protein folding. The GroEL-GroES system forms a nano-cage that allows encapsulation of the non-native substrate proteins and provides a physical environment optimized to promote and accelerate protein folding. GroES binds to the apical surface of the GroEL ring, thereby capping the opening of the GroEL channel. In Synechococcus sp. (strain CC9605), this protein is Co-chaperonin GroES.